Reading from the N-terminus, the 165-residue chain is uncharacterized protein (165 aa).

A helical membrane pass occupies residues 10–27; it reads VSLTIVFVLFFSADVSLT.

It is found in the membrane. This is an uncharacterized protein from Saccharomyces cerevisiae (strain ATCC 204508 / S288c) (Baker's yeast).